A 20-amino-acid chain; its full sequence is Maximin-Ht (20 aa).

This sequence belongs to the bombinin family. As to expression, expressed by the skin glands.

The protein resides in the secreted. Its function is as follows. Has antimicrobial activity. The chain is Maximin-Ht from Bombina maxima (Giant fire-bellied toad).